Here is a 96-residue protein sequence, read N- to C-terminus: Large ribosomal subunit protein bL21 (96 aa).

The protein belongs to the bacterial ribosomal protein bL21 family. Part of the 50S ribosomal subunit. Contacts protein L20.

In terms of biological role, this protein binds to 23S rRNA in the presence of protein L20. The sequence is that of Large ribosomal subunit protein bL21 from Chlorobium chlorochromatii (strain CaD3).